The primary structure comprises 60 residues: Large ribosomal subunit protein bL32 (60 aa).

Residues 1–22 are disordered; the sequence is MAVPARHTSKAKKNKRRTHYKL. The segment covering 7-20 has biased composition (basic residues); the sequence is HTSKAKKNKRRTHY.

Belongs to the bacterial ribosomal protein bL32 family.

In Streptococcus pyogenes serotype M3 (strain ATCC BAA-595 / MGAS315), this protein is Large ribosomal subunit protein bL32.